The chain runs to 166 residues: UPF0561 protein C2orf68 homolog (166 aa).

The span at 32-49 (NQLDRDDYDKKVKQAAKE) shows a compositional bias: basic and acidic residues. Residues 32-107 (NQLDRDDYDK…SELEPPGRQL (76 aa)) form a disordered region. The segment covering 91-101 (ESSSSGSSELE) has biased composition (low complexity).

This sequence belongs to the UPF0561 family.

This is UPF0561 protein C2orf68 homolog from Mus musculus (Mouse).